Here is a 370-residue protein sequence, read N- to C-terminus: BRISC and BRCA1-A complex member 1 (370 aa).

Disordered regions lie at residues 1-69 (METT…SPPV) and 90-126 (TTNT…ELHL). Residues 11-20 (GEERMMDLRP) are compositionally biased toward basic and acidic residues. Residues 35-45 (STGSLNSSLPS) show a composition bias toward low complexity. The interval 137–340 (VIICLDLSEE…IELHNCMAKL (204 aa)) is VWFA-like.

It belongs to the BABAM1 family. In terms of assembly, component of the ARISC complex, at least composed of uimc1/rap80, abraxas1, brcc3/brcc36, babam2 and babam1/nba1. Component of the BRCA1-A complex, at least composed of bard1, uimc1/rap80, abraxas1, brcc3/brcc36, babam2 and babam1/nba1. In the BRCA1-A complex, interacts directly with abraxas1 and babam2. Component of the BRISC complex, at least composed of abraxas2, brcc3/brcc36, babam2 and babam1/nba1.

The protein localises to the cytoplasm. Its subcellular location is the nucleus. Functionally, component of the BRCA1-A complex, a complex that specifically recognizes 'Lys-63'-linked ubiquitinated histones H2A and H2AX at DNA lesion sites. The BRCA1-A complex also possesses deubiquitinase activity that specifically removes 'Lys-63'-linked ubiquitin on histones H2A and H2AX. In the BRCA1-A complex, it is required for the complex integrity and its localization at DNA double-strand breaks (DSBs). Component of the BRISC complex, a multiprotein complex that specifically cleaves 'Lys-63'-linked ubiquitin in various substrates. In these 2 complexes, it is probably required to maintain the stability of babam2 and help the 'Lys-63'-linked deubiquitinase activity mediated by brcc3/brcc36 component. The BRISC complex is required for normal mitotic spindle assembly and microtubule attachment to kinetochores via its role in deubiquitinating numa1. The sequence is that of BRISC and BRCA1-A complex member 1 (babam1) from Danio rerio (Zebrafish).